The chain runs to 472 residues: Aspartyl/glutamyl-tRNA(Asn/Gln) amidotransferase subunit B (472 aa).

The protein belongs to the GatB/GatE family. GatB subfamily. In terms of assembly, heterotrimer of A, B and C subunits.

It catalyses the reaction L-glutamyl-tRNA(Gln) + L-glutamine + ATP + H2O = L-glutaminyl-tRNA(Gln) + L-glutamate + ADP + phosphate + H(+). It carries out the reaction L-aspartyl-tRNA(Asn) + L-glutamine + ATP + H2O = L-asparaginyl-tRNA(Asn) + L-glutamate + ADP + phosphate + 2 H(+). In terms of biological role, allows the formation of correctly charged Asn-tRNA(Asn) or Gln-tRNA(Gln) through the transamidation of misacylated Asp-tRNA(Asn) or Glu-tRNA(Gln) in organisms which lack either or both of asparaginyl-tRNA or glutaminyl-tRNA synthetases. The reaction takes place in the presence of glutamine and ATP through an activated phospho-Asp-tRNA(Asn) or phospho-Glu-tRNA(Gln). The chain is Aspartyl/glutamyl-tRNA(Asn/Gln) amidotransferase subunit B from Elusimicrobium minutum (strain Pei191).